The sequence spans 151 residues: Protein InSETG-4 (151 aa).

The protein resides in the cytoplasm. The protein localises to the cytosol. This is Protein InSETG-4 (InSet4-G) from Homo sapiens (Human).